A 349-amino-acid polypeptide reads, in one-letter code: D-alanine--D-alanine ligase (349 aa).

One can recognise an ATP-grasp domain in the interval 132–335 (KHVFEAVGVP…YSDLIEKLVD (204 aa)). 162–217 (VEKLEFPVFVKPANMGSSVGISKVDDLADLQPALSEAYKYDNRVVIEQGVDAREIE) lines the ATP pocket. Mg(2+) is bound by residues Asp-289, Glu-302, and Asn-304.

It belongs to the D-alanine--D-alanine ligase family. Mg(2+) is required as a cofactor. The cofactor is Mn(2+).

The protein localises to the cytoplasm. The enzyme catalyses 2 D-alanine + ATP = D-alanyl-D-alanine + ADP + phosphate + H(+). Its pathway is cell wall biogenesis; peptidoglycan biosynthesis. Functionally, cell wall formation. The sequence is that of D-alanine--D-alanine ligase from Lactococcus lactis subsp. lactis (strain IL1403) (Streptococcus lactis).